The following is a 750-amino-acid chain: Methylmalonyl-CoA mutase, mitochondrial (750 aa).

The transit peptide at 1–32 (MLRVKNQLFLLSPHYLKQVKESSGSRLIRQRF) directs the protein to the mitochondrion. Malonyl-CoA is bound at residue Q50. Position 89 is an N6-acetyllysine (K89). Malonyl-CoA-binding positions include 96–99 (YPTM) and 106–110 (TIRQY). K212 is modified (N6-acetyllysine). Residues 216–218 (TIQ), R228, K255, H265, and 304–306 (RLS) contribute to the malonyl-CoA site. An N6-acetyllysine modification is found at K335. Residue K343 is modified to N6-succinyllysine. At S481 the chain carries Phosphoserine. K595 bears the N6-succinyllysine mark. K602 is subject to N6-acetyllysine. In terms of domain architecture, B12-binding spans 614 to 746 (RPRLLVAKMG…DDIEKCLEKK (133 aa)). H627 is an adenosylcob(III)alamin binding site.

The protein belongs to the methylmalonyl-CoA mutase family. As to quaternary structure, homodimer. Interacts (the apoenzyme form) with MMAA; the interaction is GTP dependent. Adenosylcob(III)alamin is required as a cofactor.

Its subcellular location is the mitochondrion matrix. It is found in the mitochondrion. The protein resides in the cytoplasm. The enzyme catalyses (R)-methylmalonyl-CoA = succinyl-CoA. Its activity is regulated as follows. Inhibited by itaconyl-CoA, a metabolite that inactivates the coenzyme B12 cofactor. Its function is as follows. Catalyzes the reversible isomerization of methylmalonyl-CoA (MMCoA) (generated from branched-chain amino acid metabolism and degradation of dietary odd chain fatty acids and cholesterol) to succinyl-CoA (3-carboxypropionyl-CoA), a key intermediate of the tricarboxylic acid cycle. The chain is Methylmalonyl-CoA mutase, mitochondrial (MMUT) from Macaca fascicularis (Crab-eating macaque).